The following is a 126-amino-acid chain: Aspartate 1-decarboxylase (126 aa).

Ser25 (schiff-base intermediate with substrate; via pyruvic acid) is an active-site residue. Ser25 bears the Pyruvic acid (Ser) mark. Thr57 is a substrate binding site. Tyr58 (proton donor) is an active-site residue. Residue 73–75 (GAA) coordinates substrate.

It belongs to the PanD family. In terms of assembly, heterooctamer of four alpha and four beta subunits. The cofactor is pyruvate. In terms of processing, is synthesized initially as an inactive proenzyme, which is activated by self-cleavage at a specific serine bond to produce a beta-subunit with a hydroxyl group at its C-terminus and an alpha-subunit with a pyruvoyl group at its N-terminus.

It is found in the cytoplasm. The catalysed reaction is L-aspartate + H(+) = beta-alanine + CO2. It participates in cofactor biosynthesis; (R)-pantothenate biosynthesis; beta-alanine from L-aspartate: step 1/1. In terms of biological role, catalyzes the pyruvoyl-dependent decarboxylation of aspartate to produce beta-alanine. The protein is Aspartate 1-decarboxylase of Citrobacter koseri (strain ATCC BAA-895 / CDC 4225-83 / SGSC4696).